Here is a 473-residue protein sequence, read N- to C-terminus: O-methyltransferase ARMGADRAFT_1088206 (473 aa).

Residues 276 to 277, D299, 330 to 331, and R348 each bind S-adenosyl-L-methionine; these read AG and DM. The Proton acceptor role is filled by H352.

The protein belongs to the class I-like SAM-binding methyltransferase superfamily. Cation-independent O-methyltransferase family.

It participates in secondary metabolite biosynthesis. O-methyltransferase, part of the gene cluster that mediates the biosynthesis of melleolides, a range of antifungal and phytotoxic polyketide derivatives composed of an orsellinic acid (OA) moiety esterified to various sesquiterpene alcohols. The first step in melleolides biosynthesis is performed by the delta(6)-protoilludene synthase PRO1 which catalyzes the cyclization of farnesyl diphosphate to protoilludene. The orsellinic acid synthase armB produces OA by condensing acetyl-CoA with 3 malonyl-CoA units in a three-round chain elongation reaction folowed by a C2-C7 ring closure. ArmB further catalyzes the trans-esterification of OA to the various sesquiterpene alcohols resulting from the hydroxylation of protoilludene. The melleolides cluster also includes 5 cytochrome P450 monooxygenases, 4 NAD(+)-dependent oxidoreductases, one flavin-dependent oxidoreductase, and one O-methyltransferase. The cytochrome P450 monooxygenases may be involved in protoilludene hydroxylation to elaborate melleolides with multiple alcohol groups, such as melleolide D, which carries alcohol functionalities at C-4, C-5, C-10, and C-13. The role of the NAD(+)-dependent enzymes remains unknown. Numerous melleolides, including arnamial, show 5'-O-methylation of the aromatic moiety which may be catalyzed by the methyltransferase encoded in the cluster. The flavin-dependent oxidoreductase might represent the dehydrogenase yielding the aldehyde in position 1 of arnamial and other melleolides. Finally, several halogenase localized outside of the cluster, are able to catalyze the transfer of a single chlorine atom to the melleolide backbone, resulting in a 6'-chloromelleolide product. The polypeptide is O-methyltransferase ARMGADRAFT_1088206 (Armillaria gallica (Bulbous honey fungus)).